We begin with the raw amino-acid sequence, 451 residues long: D-aminoacyl-tRNA deacylase (451 aa).

The disordered stretch occupies residues 410-437 (RTADIPEGPKFGKLASGESVEIDGEEID).

Belongs to the DtdA deacylase family. As to quaternary structure, monomer. The cofactor is Zn(2+).

It catalyses the reaction a D-aminoacyl-tRNA + H2O = a tRNA + a D-alpha-amino acid + H(+). The enzyme catalyses glycyl-tRNA(Ala) + H2O = tRNA(Ala) + glycine + H(+). In terms of biological role, D-aminoacyl-tRNA deacylase with broad substrate specificity. By recycling D-aminoacyl-tRNA to D-amino acids and free tRNA molecules, this enzyme counteracts the toxicity associated with the formation of D-aminoacyl-tRNA entities in vivo. The sequence is that of D-aminoacyl-tRNA deacylase from Haloarcula marismortui (strain ATCC 43049 / DSM 3752 / JCM 8966 / VKM B-1809) (Halobacterium marismortui).